A 1505-amino-acid chain; its full sequence is G patch domain-containing protein 8 (1505 aa).

One can recognise a G-patch domain in the interval 40 to 86 (SDNIGHRLLQKHGWKLGQGLGKSLQGRTDPIPIVVKYDVMGMGRMEM). Residues 89-124 (DYAEDATERRRVLEVEKEDTEELRQKYKDYVDKEKA) adopt a coiled-coil conformation. A C2H2-type zinc finger spans residues 136 to 160 (FYCELCDKQYQKHQEFDNHINSYDH). 2 stretches are compositionally biased toward basic and acidic residues: residues 166-175 (LKDLKQREFA) and 182-206 (SRKDEKKQEKALRRLHELAEQRKQA). Residues 166–244 (LKDLKQREFA…SSTNSGASAV (79 aa)) are disordered. Over residues 223–233 (VDEDGGEEDKD) the composition is skewed to acidic residues. K311 participates in a covalent cross-link: Glycyl lysine isopeptide (Lys-Gly) (interchain with G-Cter in SUMO2). Basic and acidic residues-rich tracts occupy residues 322–339 (HAEEGSSEDGTKADEKSS) and 421–436 (EGDHSAHSKSAPENRK). Disordered stretches follow at residues 322–393 (HAEE…EPEY) and 419–537 (QMEG…FPVL). The segment covering 437 to 449 (SSSPKPQGCSKTA) has biased composition (polar residues). K479 is modified (N6-acetyllysine). Residue K573 forms a Glycyl lysine isopeptide (Lys-Gly) (interchain with G-Cter in SUMO2) linkage. Composition is skewed to basic and acidic residues over residues 575 to 612 (SRNKDAKAKGTEKPKDVAGSSKDHLQSLDPREPNKSQE) and 648 to 665 (SETEDTGRSHPSKKEPSG). The disordered stretch occupies residues 575 to 1304 (SRNKDAKAKG…ESTDGTEDAS (730 aa)). Phosphoserine is present on S648. A compositionally biased stretch (basic residues) spans 666 to 687 (KSHRHKKKKKHKKSSKHKRKHK). The segment covering 688–702 (ADTEEKSSKAESGEK) has biased composition (basic and acidic residues). Positions 703-715 (SKKRKKRKRKKNK) are enriched in basic residues. A phosphoserine mark is found at S733, S735, and S753. Positions 745-767 (AQDDSQRRSLPAEEGNSGKKDDG) are enriched in basic and acidic residues. Basic residues predominate over residues 794–804 (ANTKHSSRSSH). A compositionally biased stretch (acidic residues) spans 832–849 (SEEEEEEEEEEEEEDEDS). The segment covering 856–871 (SRSRSGHRHSSHRSSR) has biased composition (basic residues). The span at 872 to 900 (RSYSSSSDASSDQSCYSRQHSYSDDSYSD) shows a compositional bias: low complexity. 2 positions are modified to phosphoserine: S915 and S918. Residues 923–932 (SKHRSKRHKY) are compositionally biased toward basic residues. A phosphoserine mark is found at S985, S1013, S1018, S1037, and S1039. Over residues 1017–1031 (ESPEERRSGRRDFIR) the composition is skewed to basic and acidic residues. Residues 1050–1063 (GPGKKEDGRGDDSK) show a composition bias toward basic and acidic residues. S1085 bears the Phosphoserine mark. Composition is skewed to basic and acidic residues over residues 1097-1112 (LLEKIQSRKVERKPNV), 1163-1185 (KKCEESGLERGEEQEHSEPEEGS), and 1211-1220 (EEPKSEEATA). Residue K1109 forms a Glycyl lysine isopeptide (Lys-Gly) (interchain with G-Cter in SUMO2) linkage. Phosphoserine is present on S1179.

This chain is G patch domain-containing protein 8 (Gpatch8), found in Mus musculus (Mouse).